Reading from the N-terminus, the 176-residue chain is Tubulin polymerization-promoting protein family member 3 (176 aa).

Ala2 bears the N-acetylalanine mark. The tract at residues 132 to 152 (TGSHKERFDESGKGKGIAGRQ) is disordered. The segment covering 134–144 (SHKERFDESGK) has biased composition (basic and acidic residues).

Belongs to the TPPP family. Expressed in endometrium during the mid-secretory phase (LH + 7) (at protein level).

It is found in the cytoplasm. The protein resides in the cytoskeleton. Functionally, regulator of microtubule dynamic that has microtubule bundling activity. Required for embryo implantation; possibly by regulating beta-catenin. Also required for decidualization via regulation of beta-catenin. This Homo sapiens (Human) protein is Tubulin polymerization-promoting protein family member 3.